The following is a 248-amino-acid chain: Adenosylcobinamide-GDP ribazoletransferase (248 aa).

Transmembrane regions (helical) follow at residues glutamate 24–tryptophan 44, leucine 47–phenylalanine 67, isoleucine 70–serine 90, valine 106–leucine 126, isoleucine 134–alanine 154, leucine 165–leucine 185, phenylalanine 186–phenylalanine 206, and alanine 228–isoleucine 248.

The protein belongs to the CobS family. The cofactor is Mg(2+).

Its subcellular location is the cell membrane. It catalyses the reaction alpha-ribazole + adenosylcob(III)inamide-GDP = adenosylcob(III)alamin + GMP + H(+). The catalysed reaction is alpha-ribazole 5'-phosphate + adenosylcob(III)inamide-GDP = adenosylcob(III)alamin 5'-phosphate + GMP + H(+). It functions in the pathway cofactor biosynthesis; adenosylcobalamin biosynthesis; adenosylcobalamin from cob(II)yrinate a,c-diamide: step 7/7. Joins adenosylcobinamide-GDP and alpha-ribazole to generate adenosylcobalamin (Ado-cobalamin). Also synthesizes adenosylcobalamin 5'-phosphate from adenosylcobinamide-GDP and alpha-ribazole 5'-phosphate. The polypeptide is Adenosylcobinamide-GDP ribazoletransferase (Listeria welshimeri serovar 6b (strain ATCC 35897 / DSM 20650 / CCUG 15529 / CIP 8149 / NCTC 11857 / SLCC 5334 / V8)).